Here is a 471-residue protein sequence, read N- to C-terminus: MTDLPDSTRWQLWIVAFGFFMQSLDTTIVNTALPSMAQSLGESPLHMHMVIVSYVLTVAVMLPASGWLADKVGVRNIFFTAIVLFTLGSLFCALSATLNELLLARALQGVGGAMMVPVGRLTVMKIVPREQYMAAMTFVTLPGQVGPLLGPALGGLLVEYASWHWIFLINIPVGIIGAIATLMLMPNYTMQTRRFDLSGFLLLAVGMAVLTLALDGSKGTGLSPLAIAGLAAIGVVALVLYLLHARNNNRALFSLKLFRTRTFSLGLAGSFAGRIGSGMLPFMTPVFLQIGLGFSPFHAGLMMIPMVLGSMGMKRIVVQVVNRFGYRRVLVATTLGLSLVTLLFMTTALLGWYYVLPFVLFLQGMVNSTRFSSMNTLTLKDLPDNLASSGNSLLSMIMQLSMSIGVTIAGLLLGLFGSQHVSVDSSTTQTVFMYTWLSMALIIALPAFIFARVPNDTHQNVAISRRKRSAQ.

Topologically, residues 1–11 are periplasmic; it reads MTDLPDSTRWQ. The helical transmembrane segment at 12-32 threads the bilayer; the sequence is LWIVAFGFFMQSLDTTIVNTA. The Cytoplasmic segment spans residues 33-48; sequence LPSMAQSLGESPLHMH. Residues 49–69 form a helical membrane-spanning segment; sequence MVIVSYVLTVAVMLPASGWLA. Residues 70 to 76 lie on the Periplasmic side of the membrane; sequence DKVGVRN. Residues 77–97 traverse the membrane as a helical segment; sequence IFFTAIVLFTLGSLFCALSAT. At 98-101 the chain is on the cytoplasmic side; it reads LNEL. Residues 102-124 traverse the membrane as a helical segment; sequence LLARALQGVGGAMMVPVGRLTVM. The Periplasmic portion of the chain corresponds to 125-137; it reads KIVPREQYMAAMT. Residues 138-158 form a helical membrane-spanning segment; the sequence is FVTLPGQVGPLLGPALGGLLV. At 159–164 the chain is on the cytoplasmic side; it reads EYASWH. A helical membrane pass occupies residues 165–185; it reads WIFLINIPVGIIGAIATLMLM. Residues 186–196 are Periplasmic-facing; the sequence is PNYTMQTRRFD. The chain crosses the membrane as a helical span at residues 197 to 217; that stretch reads LSGFLLLAVGMAVLTLALDGS. Topologically, residues 218 to 224 are cytoplasmic; it reads KGTGLSP. Residues 225 to 245 form a helical membrane-spanning segment; that stretch reads LAIAGLAAIGVVALVLYLLHA. The Periplasmic portion of the chain corresponds to 246 to 262; that stretch reads RNNNRALFSLKLFRTRT. Residues 263-283 form a helical membrane-spanning segment; it reads FSLGLAGSFAGRIGSGMLPFM. Residues 284 to 285 are Cytoplasmic-facing; that stretch reads TP. The chain crosses the membrane as a helical span at residues 286–306; sequence VFLQIGLGFSPFHAGLMMIPM. The Periplasmic segment spans residues 307 to 341; it reads VLGSMGMKRIVVQVVNRFGYRRVLVATTLGLSLVT. The chain crosses the membrane as a helical span at residues 342-362; the sequence is LLFMTTALLGWYYVLPFVLFL. The Cytoplasmic segment spans residues 363–395; sequence QGMVNSTRFSSMNTLTLKDLPDNLASSGNSLLS. A helical transmembrane segment spans residues 396-416; sequence MIMQLSMSIGVTIAGLLLGLF. At 417 to 430 the chain is on the periplasmic side; the sequence is GSQHVSVDSSTTQT. The helical transmembrane segment at 431–451 threads the bilayer; the sequence is VFMYTWLSMALIIALPAFIFA. Residues 452–471 are Cytoplasmic-facing; it reads RVPNDTHQNVAISRRKRSAQ.

Belongs to the major facilitator superfamily. TCR/Tet family.

The protein localises to the cell inner membrane. The sequence is that of Putative multidrug resistance protein MdtD from Escherichia fergusonii (strain ATCC 35469 / DSM 13698 / CCUG 18766 / IAM 14443 / JCM 21226 / LMG 7866 / NBRC 102419 / NCTC 12128 / CDC 0568-73).